A 69-amino-acid polypeptide reads, in one-letter code: Putative membrane protein insertion efficiency factor (69 aa).

Belongs to the UPF0161 family.

It is found in the cell membrane. Could be involved in insertion of integral membrane proteins into the membrane. This Alkaliphilus metalliredigens (strain QYMF) protein is Putative membrane protein insertion efficiency factor.